A 144-amino-acid polypeptide reads, in one-letter code: Probable disulfide formation protein (144 aa).

A helical transmembrane segment spans residues 10 to 29 (WNLLLLTWLVALISTLSALF). C39 and C42 are disulfide-bonded. A run of 2 helical transmembrane segments spans residues 44–63 (FQRA…CYRS) and 70–87 (YALP…VHTL). Cysteines 100 and 107 form a disulfide. The chain crosses the membrane as a helical span at residues 116–138 (GVVPLPALALFAFIIIAILLIII).

It belongs to the DsbB family. BdbC subfamily.

The protein resides in the cell inner membrane. Functionally, required for disulfide bond formation in some proteins. This Metapseudomonas resinovorans (Pseudomonas resinovorans) protein is Probable disulfide formation protein.